The chain runs to 377 residues: Protein-tyrosine sulfotransferase 2 (377 aa).

The Cytoplasmic portion of the chain corresponds to 1 to 8 (MRLSVRRV). A helical; Signal-anchor for type II membrane protein transmembrane segment spans residues 9 to 25 (LLAAGCALVLVLAVQLG). Over 26–377 (QQVLECRAVL…NSTSSHLGSS (352 aa)) the chain is Lumenal. Residue 78–82 (RSGTT) participates in 3'-phosphoadenylyl sulfate binding. The cysteines at positions 96 and 156 are disulfide-linked. Catalysis depends on E99, which acts as the Proton donor/acceptor. The tract at residues 101–105 (RIIPR) is interaction with peptide substrate. R183, S191, and R195 together coordinate 3'-phosphoadenylyl sulfate. A disulfide bridge connects residues C225 and C233. 3'-phosphoadenylyl sulfate is bound by residues Y238, 285 to 294 (STDQVIKPVN), and K300. N-linked (GlcNAc...) asparagine glycans are attached at residues N343 and N368.

The protein belongs to the protein sulfotransferase family. In terms of assembly, homodimer. Can also form heterodimers with TPST1. In terms of processing, N-glycosylated. Widely expressed.

It localises to the golgi apparatus membrane. The catalysed reaction is L-tyrosyl-[protein] + 3'-phosphoadenylyl sulfate = O-sulfo-L-tyrosine-[protein] + adenosine 3',5'-bisphosphate + H(+). Catalyzes the O-sulfation of tyrosine residues within acidic motifs of polypeptides, using 3'-phosphoadenylyl sulfate (PAPS) as cosubstrate. The chain is Protein-tyrosine sulfotransferase 2 (TPST2) from Homo sapiens (Human).